Consider the following 351-residue polypeptide: Protein IQ-DOMAIN 27 (351 aa).

The segment at 15 to 37 (KKSKDRSHVSGGDSVKGGDHSGD) is disordered. Positions 98–114 (EERWAAVKIQKVFRGSL) are calmodulin-binding. IQ domains lie at 99-127 (ERWA…GIVK) and 128-150 (LQAL…SIQT). Positions 191-198 (DRRTKIVE) match the Nuclear localization signal motif. Residues 299-310 (SFKAKVRSHSAP) show a composition bias toward basic residues. Residues 299-351 (SFKAKVRSHSAPRQRSERQRLSLDEVMASKSSVSGVSMSHQHPPRHSCSCDPL) form a disordered region. Residues 312 to 321 (QRSERQRLSL) are compositionally biased toward basic and acidic residues. Residues 324–337 (VMASKSSVSGVSMS) are compositionally biased toward low complexity.

The protein belongs to the IQD family. As to quaternary structure, binds to multiple calmodulin (CaM) in the presence of Ca(2+) and CaM-like proteins.

The protein localises to the nucleus. Its subcellular location is the nucleus envelope. It localises to the cytoplasm. The protein resides in the cytoskeleton. In terms of biological role, may be involved in cooperative interactions with calmodulins or calmodulin-like proteins. Recruits calmodulin proteins to microtubules, thus being a potential scaffold in cellular signaling and trafficking. May associate with nucleic acids and regulate gene expression at the transcriptional or post-transcriptional level. This chain is Protein IQ-DOMAIN 27, found in Arabidopsis thaliana (Mouse-ear cress).